A 106-amino-acid polypeptide reads, in one-letter code: Large ribosomal subunit protein bL21c (106 aa).

This sequence belongs to the bacterial ribosomal protein bL21 family. As to quaternary structure, part of the 50S ribosomal subunit.

Its subcellular location is the plastid. It localises to the chloroplast. This protein binds to 23S rRNA. The chain is Large ribosomal subunit protein bL21c from Gracilaria tenuistipitata var. liui (Red alga).